The primary structure comprises 272 residues: Ribosomal RNA small subunit methyltransferase A (272 aa).

S-adenosyl-L-methionine is bound by residues asparagine 16, leucine 18, glycine 43, glutamate 64, aspartate 89, and asparagine 110.

Belongs to the class I-like SAM-binding methyltransferase superfamily. rRNA adenine N(6)-methyltransferase family. RsmA subfamily.

Its subcellular location is the cytoplasm. The enzyme catalyses adenosine(1518)/adenosine(1519) in 16S rRNA + 4 S-adenosyl-L-methionine = N(6)-dimethyladenosine(1518)/N(6)-dimethyladenosine(1519) in 16S rRNA + 4 S-adenosyl-L-homocysteine + 4 H(+). In terms of biological role, specifically dimethylates two adjacent adenosines (A1518 and A1519) in the loop of a conserved hairpin near the 3'-end of 16S rRNA in the 30S particle. May play a critical role in biogenesis of 30S subunits. The chain is Ribosomal RNA small subunit methyltransferase A from Pseudomonas fluorescens (strain Pf0-1).